We begin with the raw amino-acid sequence, 457 residues long: NADH-quinone oxidoreductase subunit D (457 aa).

Residues 1 to 23 (MSTHTETPVDGSAETITGAQPYE) are disordered.

This sequence belongs to the complex I 49 kDa subunit family. NDH-1 is composed of 14 different subunits. Subunits NuoB, C, D, E, F, and G constitute the peripheral sector of the complex.

The protein resides in the cell membrane. It carries out the reaction a quinone + NADH + 5 H(+)(in) = a quinol + NAD(+) + 4 H(+)(out). In terms of biological role, NDH-1 shuttles electrons from NADH, via FMN and iron-sulfur (Fe-S) centers, to quinones in the respiratory chain. The immediate electron acceptor for the enzyme in this species is believed to be a menaquinone. Couples the redox reaction to proton translocation (for every two electrons transferred, four hydrogen ions are translocated across the cytoplasmic membrane), and thus conserves the redox energy in a proton gradient. The protein is NADH-quinone oxidoreductase subunit D of Parafrankia sp. (strain EAN1pec).